Here is a 118-residue protein sequence, read N- to C-terminus: Evasin P1080 (118 aa).

The N-terminal stretch at 1-19 (FFQLAVFVVILFNINLLSA) is a signal peptide. Intrachain disulfides connect Cys-41/Cys-60, Cys-45/Cys-62, and Cys-56/Cys-73. An N-linked (GlcNAc...) asparagine glycan is attached at Asn-44. N-linked (GlcNAc...) asparagine glycans are attached at residues Asn-67 and Asn-104.

It is found in the secreted. Functionally, salivary chemokine-binding protein which binds to host chemokines CXCL1, CXCL2, CXCL3, CXCL4, CXCL5, CXCL6, CXCL10, CXCL11 and CXCL13. In Ixodes ricinus (Common tick), this protein is Evasin P1080.